A 140-amino-acid polypeptide reads, in one-letter code: Pro-Viral epidermal growth factor (140 aa).

A signal peptide spans 1-18; the sequence is MSMKYLMLLFAAMIIRSF. At 19 to 100 the chain is on the extracellular side; sequence ADSGNAIETT…SENPNTTTSY (82 aa). An N-linked (GlcNAc...) asparagine; by host glycan is attached at N34. The EGF-like domain maps to 41–81; sequence AIRLCGPEGDGYCLHGDCIHARDIDGMYCRCSHGYTGIRCQ. Disulfide bonds link C45/C58, C53/C69, and C71/C80. N-linked (GlcNAc...) asparagine; by host glycosylation is present at N95. A helical membrane pass occupies residues 101–121; sequence IPSPGIMLVLVGIIIITCCLL. Residues 122–140 are Cytoplasmic-facing; sequence SVYRFTRRTKLPIQDMVVP.

This sequence belongs to the orthopoxvirus OPG019 family. Viral epidermal growth factor interacts with host EGFR and promotes EGFR dimerization. In terms of processing, cleaved at the cell surface by host ADAM10, thereby releasing the secreted form of VGF.

Its subcellular location is the host membrane. The protein resides in the secreted. Stimulates cellular proliferation (hyperplasia)and mobility around infected cells to promote rapid and efficient spread of infection. This effect is beneficial for virus replication in vivo, because poxviruses replicate possibly better in proliferating cells than in quiescent cells. Acts by binding host EGFR, inducing its dimerization, autophosphorylation and leading to activation of several cellular pathways regulating cell proliferation or cell survival. The activation by host EGFR of mitogen activated protein kinases (MAPK) and extracellular-signal regulated kinases (ERK) are essential for the positive effect of vaccinia growth factor on poxvirus virulence in vivo. This chain is Pro-Viral epidermal growth factor (OPG019), found in Bos taurus (Bovine).